The following is a 493-amino-acid chain: Argininosuccinate lyase (493 aa).

The protein belongs to the lyase 1 family. Argininosuccinate lyase subfamily.

It localises to the cytoplasm. The catalysed reaction is 2-(N(omega)-L-arginino)succinate = fumarate + L-arginine. It functions in the pathway amino-acid biosynthesis; L-arginine biosynthesis; L-arginine from L-ornithine and carbamoyl phosphate: step 3/3. The sequence is that of Argininosuccinate lyase from Clavibacter sepedonicus (Clavibacter michiganensis subsp. sepedonicus).